The sequence spans 305 residues: tRNA uridine(34) hydroxylase (305 aa).

In terms of domain architecture, Rhodanese spans 124 to 219 (QDEETLVVDT…YLETIPKEES (96 aa)). Catalysis depends on C179, which acts as the Cysteine persulfide intermediate.

Belongs to the TrhO family.

The catalysed reaction is uridine(34) in tRNA + AH2 + O2 = 5-hydroxyuridine(34) in tRNA + A + H2O. Functionally, catalyzes oxygen-dependent 5-hydroxyuridine (ho5U) modification at position 34 in tRNAs. The sequence is that of tRNA uridine(34) hydroxylase from Bartonella bacilliformis (strain ATCC 35685 / KC583 / Herrer 020/F12,63).